Consider the following 60-residue polypeptide: Large ribosomal subunit protein bL32 (60 aa).

The protein belongs to the bacterial ribosomal protein bL32 family.

The polypeptide is Large ribosomal subunit protein bL32 (Azotobacter vinelandii (strain DJ / ATCC BAA-1303)).